Here is a 463-residue protein sequence, read N- to C-terminus: Methionine aminopeptidase 2-1 (463 aa).

Residues 1–12 are compositionally biased toward basic and acidic residues; sequence MGSKTPDGHRQG. The disordered stretch occupies residues 1–96; the sequence is MGSKTPDGHR…SGQQTTPPRV (96 aa). Over residues 41 to 53 the composition is skewed to acidic residues; sequence SGEDDEDGDDDEE. Residues 58–67 show a composition bias toward polar residues; the sequence is DLNSRAQPNN. Basic residues predominate over residues 70-85; sequence KKRKRKNNKKKKKKRP. Substrate is bound at residue His215. A divalent metal cation-binding residues include Asp236, Asp247, and His316. His324 provides a ligand contact to substrate. Residues Glu349 and Glu444 each coordinate a divalent metal cation.

Belongs to the peptidase M24A family. Methionine aminopeptidase eukaryotic type 2 subfamily. Requires Co(2+) as cofactor. The cofactor is Zn(2+). Mn(2+) serves as cofactor. Fe(2+) is required as a cofactor.

It is found in the cytoplasm. The catalysed reaction is Release of N-terminal amino acids, preferentially methionine, from peptides and arylamides.. Functionally, cotranslationally removes the N-terminal methionine from nascent proteins. The N-terminal methionine is often cleaved when the second residue in the primary sequence is small and uncharged (Met-Ala-, Cys, Gly, Pro, Ser, Thr, or Val). In Arthroderma otae (strain ATCC MYA-4605 / CBS 113480) (Microsporum canis), this protein is Methionine aminopeptidase 2-1.